A 213-amino-acid polypeptide reads, in one-letter code: ATP phosphoribosyltransferase (213 aa).

This sequence belongs to the ATP phosphoribosyltransferase family. Short subfamily. Heteromultimer composed of HisG and HisZ subunits.

The protein localises to the cytoplasm. It carries out the reaction 1-(5-phospho-beta-D-ribosyl)-ATP + diphosphate = 5-phospho-alpha-D-ribose 1-diphosphate + ATP. It participates in amino-acid biosynthesis; L-histidine biosynthesis; L-histidine from 5-phospho-alpha-D-ribose 1-diphosphate: step 1/9. In terms of biological role, catalyzes the condensation of ATP and 5-phosphoribose 1-diphosphate to form N'-(5'-phosphoribosyl)-ATP (PR-ATP). Has a crucial role in the pathway because the rate of histidine biosynthesis seems to be controlled primarily by regulation of HisG enzymatic activity. This chain is ATP phosphoribosyltransferase (hisG), found in Listeria innocua serovar 6a (strain ATCC BAA-680 / CLIP 11262).